The primary structure comprises 282 residues: Energy-coupling factor transporter ATP-binding protein EcfA1 (282 aa).

The region spanning 6–243 (ISFDHVTFTY…VEMLKRIGLD (238 aa)) is the ABC transporter domain. 40–47 (GHNGSGKS) is a binding site for ATP.

It belongs to the ABC transporter superfamily. Energy-coupling factor EcfA family. Forms a stable energy-coupling factor (ECF) transporter complex composed of 2 membrane-embedded substrate-binding proteins (S component), 2 ATP-binding proteins (A component) and 2 transmembrane proteins (T component).

It localises to the cell membrane. Functionally, ATP-binding (A) component of a common energy-coupling factor (ECF) ABC-transporter complex. Unlike classic ABC transporters this ECF transporter provides the energy necessary to transport a number of different substrates. In Lactobacillus delbrueckii subsp. bulgaricus (strain ATCC 11842 / DSM 20081 / BCRC 10696 / JCM 1002 / NBRC 13953 / NCIMB 11778 / NCTC 12712 / WDCM 00102 / Lb 14), this protein is Energy-coupling factor transporter ATP-binding protein EcfA1.